Consider the following 366-residue polypeptide: tRNA/tmRNA (uracil-C(5))-methyltransferase (366 aa).

S-adenosyl-L-methionine is bound by residues Gln-190, Tyr-218, Asn-223, Glu-239, and Asp-299. Cys-324 functions as the Nucleophile in the catalytic mechanism. The active-site Proton acceptor is Glu-358.

It belongs to the class I-like SAM-binding methyltransferase superfamily. RNA M5U methyltransferase family. TrmA subfamily.

The catalysed reaction is uridine(54) in tRNA + S-adenosyl-L-methionine = 5-methyluridine(54) in tRNA + S-adenosyl-L-homocysteine + H(+). It catalyses the reaction uridine(341) in tmRNA + S-adenosyl-L-methionine = 5-methyluridine(341) in tmRNA + S-adenosyl-L-homocysteine + H(+). In terms of biological role, dual-specificity methyltransferase that catalyzes the formation of 5-methyluridine at position 54 (m5U54) in all tRNAs, and that of position 341 (m5U341) in tmRNA (transfer-mRNA). In Citrobacter koseri (strain ATCC BAA-895 / CDC 4225-83 / SGSC4696), this protein is tRNA/tmRNA (uracil-C(5))-methyltransferase.